A 284-amino-acid polypeptide reads, in one-letter code: Tropomyosin (284 aa).

The tract at residues 1–54 is disordered; that stretch reads MDAIKKKMQAMKLEKDNAMDRADTLEQQNKEANNRAEKTEEEIRATQKKMQQVE. Residues 1–273 are a coiled coil; the sequence is MDAIKKKMQA…KEKYKSITDE (273 aa). Residues 12-45 are compositionally biased toward basic and acidic residues; it reads KLEKDNAMDRADTLEQQNKEANNRAEKTEEEIRA.

The protein belongs to the tropomyosin family. Homodimer. In terms of tissue distribution, muscle (at protein level). Expressed in leg and chest protection muscle (at protein level). Expressed in claw muscle.

In terms of biological role, tropomyosin, in association with the troponin complex, plays a central role in the calcium dependent regulation of muscle contraction. This Eriocheir sinensis (Chinese mitten crab) protein is Tropomyosin.